Consider the following 398-residue polypeptide: Gastric triacylglycerol lipase (398 aa).

The signal sequence occupies residues 1–19; it reads MWLLLTMASLISVLGTTHG. N-linked (GlcNAc...) asparagine glycans are attached at residues N34 and N99. In terms of domain architecture, AB hydrolase-1 spans 78–377; sequence PVVFLQHGLL…PFYNHLDFIW (300 aa). S172 (nucleophile) is an active-site residue. Cysteines 246 and 255 form a disulfide. N-linked (GlcNAc...) asparagine glycans are attached at residues N271 and N327. Active-site charge relay system residues include D343 and H372.

This sequence belongs to the AB hydrolase superfamily. Lipase family.

It localises to the secreted. It catalyses the reaction a triacylglycerol + H2O = a diacylglycerol + a fatty acid + H(+). The catalysed reaction is 1,2,3-tri-(9Z-octadecenoyl)-glycerol + H2O = 1,2-di-(9Z-octadecenoyl)-sn-glycerol + (9Z)-octadecenoate + H(+). The enzyme catalyses 1,2,3-trioctanoylglycerol + H2O = 1,2-dioctanoyl-sn-glycerol + octanoate + H(+). Its function is as follows. Catalyzes the hydrolysis of triacylglycerols to yield free fatty acids, diacylglycerol, monoacylglycerol, and glycerol. Shows a preferential hydrolysis at the sn-3 position of triacylglycerol. The chain is Gastric triacylglycerol lipase (LIPF) from Homo sapiens (Human).